The following is a 901-amino-acid chain: Protein translocase subunit SecA 1 (901 aa).

Residues Q89, 107 to 111, and D502 contribute to the ATP site; that span reads GEGKT. The interval 856-875 is disordered; sequence AEAKASGDARPGFVEDDPST. C885, C887, C896, and H897 together coordinate Zn(2+).

The protein belongs to the SecA family. Monomer and homodimer. Part of the essential Sec protein translocation apparatus which comprises SecA, SecYEG and auxiliary proteins SecDF-YajC and YidC. Zn(2+) is required as a cofactor.

Its subcellular location is the cell inner membrane. The protein localises to the cytoplasm. It carries out the reaction ATP + H2O + cellular proteinSide 1 = ADP + phosphate + cellular proteinSide 2.. In terms of biological role, part of the Sec protein translocase complex. Interacts with the SecYEG preprotein conducting channel. Has a central role in coupling the hydrolysis of ATP to the transfer of proteins into and across the cell membrane, serving both as a receptor for the preprotein-SecB complex and as an ATP-driven molecular motor driving the stepwise translocation of polypeptide chains across the membrane. This chain is Protein translocase subunit SecA 1, found in Ruegeria pomeroyi (strain ATCC 700808 / DSM 15171 / DSS-3) (Silicibacter pomeroyi).